We begin with the raw amino-acid sequence, 77 residues long: Translational regulator CsrA (77 aa).

The protein belongs to the CsrA/RsmA family. As to quaternary structure, homodimer; the beta-strands of each monomer intercalate to form a hydrophobic core, while the alpha-helices form wings that extend away from the core.

It is found in the cytoplasm. Its function is as follows. A translational regulator that binds mRNA to regulate translation initiation and/or mRNA stability. Usually binds in the 5'-UTR at or near the Shine-Dalgarno sequence preventing ribosome-binding, thus repressing translation. Its main target seems to be the major flagellin gene, while its function is anatagonized by FliW. The chain is Translational regulator CsrA from Pseudarthrobacter chlorophenolicus (strain ATCC 700700 / DSM 12829 / CIP 107037 / JCM 12360 / KCTC 9906 / NCIMB 13794 / A6) (Arthrobacter chlorophenolicus).